Reading from the N-terminus, the 30-residue chain is Snaclec carinactivase-1 regulatory subunit 17 kDa chain (30 aa).

Residues 1-30 form the C-type lectin domain; sequence DCLPGWSSHEGHCYKVFNQEMYWADAEKFC. C2 and C13 are disulfide-bonded.

The protein belongs to the snaclec family. Heterodimer of a metalloproteinase subunit and a regulatory subunit comprising two polypeptides disulfide-linked (14 kDa and 17 kDa chains). In terms of tissue distribution, expressed by the venom gland.

It localises to the secreted. Its function is as follows. Calcium-dependent prothrombin activator. This protein may activate prothrombin via recognition by the regulatory subunit of the calcium ion bound conformation of its gamma-carboxyglutamic acid (GLA) domain, and the subsequent conversion of prothrombin to active thrombin is catalyzed by the catalytic subunit. In Echis carinatus (Saw-scaled viper), this protein is Snaclec carinactivase-1 regulatory subunit 17 kDa chain.